Consider the following 475-residue polypeptide: Ribulose bisphosphate carboxylase large chain (475 aa).

Positions 1–2 (MS) are excised as a propeptide. At P3 the chain carries N-acetylproline. At K14 the chain carries N6,N6,N6-trimethyllysine. Substrate-binding residues include N123 and T173. The active-site Proton acceptor is the K175. A substrate-binding site is contributed by K177. Mg(2+) contacts are provided by K201, D203, and E204. K201 bears the N6-carboxylysine mark. H294 (proton acceptor) is an active-site residue. R295, H327, and S379 together coordinate substrate.

The protein belongs to the RuBisCO large chain family. Type I subfamily. As to quaternary structure, heterohexadecamer of 8 large chains and 8 small chains; disulfide-linked. The disulfide link is formed within the large subunit homodimers. It depends on Mg(2+) as a cofactor. In terms of processing, the disulfide bond which can form in the large chain dimeric partners within the hexadecamer appears to be associated with oxidative stress and protein turnover.

Its subcellular location is the plastid. It localises to the chloroplast. It carries out the reaction 2 (2R)-3-phosphoglycerate + 2 H(+) = D-ribulose 1,5-bisphosphate + CO2 + H2O. It catalyses the reaction D-ribulose 1,5-bisphosphate + O2 = 2-phosphoglycolate + (2R)-3-phosphoglycerate + 2 H(+). Functionally, ruBisCO catalyzes two reactions: the carboxylation of D-ribulose 1,5-bisphosphate, the primary event in carbon dioxide fixation, as well as the oxidative fragmentation of the pentose substrate in the photorespiration process. Both reactions occur simultaneously and in competition at the same active site. In Lotus japonicus (Lotus corniculatus var. japonicus), this protein is Ribulose bisphosphate carboxylase large chain.